Here is a 124-residue protein sequence, read N- to C-terminus: uncharacterized protein (124 aa).

Residues 2 to 22 (AIIIAIIAAVIVIAALITFNV) traverse the membrane as a helical segment. Residues 24–124 (NASPGPEKQE…ALLSMKNKKK (101 aa)) are disordered. Composition is skewed to basic and acidic residues over residues 30-58 (EKQE…RAAE), 67-81 (DSPK…DDIY), and 89-113 (KHSD…RSYR).

It is found in the membrane. This is an uncharacterized protein from Bacillus subtilis (strain 168).